A 419-amino-acid chain; its full sequence is Cytosine permease (419 aa).

The Cytoplasmic segment spans residues 1–19; the sequence is MSQDNNFSQGPVPQSARKG. Residues 20 to 39 form a helical membrane-spanning segment; it reads VLALTFVMLGLTFFSASMWT. The Periplasmic segment spans residues 40-51; it reads GGTLGTGLSYHD. A helical membrane pass occupies residues 52–71; it reads FFLAVLIGNLLLGIYTSFLG. Topologically, residues 72-100 are cytoplasmic; sequence YIGAKTGLTTHLLARFSFGVKGSWLPSLL. A helical transmembrane segment spans residues 101–120; sequence LGGTQVGWFGVGVAMFAIPV. At 121 to 127 the chain is on the periplasmic side; the sequence is GKATGLD. A helical transmembrane segment spans residues 128-147; it reads INLLIAVSGLLMTVTVFFGI. At 148–152 the chain is on the cytoplasmic side; it reads SALTV. The chain crosses the membrane as a helical span at residues 153-172; the sequence is LSVIAVPAIACLGGYSVWLA. The Periplasmic segment spans residues 173 to 192; that stretch reads VNGMGGLDALKAVVPAQPLD. The chain crosses the membrane as a helical span at residues 193 to 212; that stretch reads FNVALALVVGSFISAGTLTA. Topologically, residues 213–221 are cytoplasmic; sequence DFVRFGRNA. A helical transmembrane segment spans residues 222-242; that stretch reads KLAVLVAMVAFFLGNSLMFIF. The Periplasmic segment spans residues 243–257; it reads GAAGAAALGMADISD. A helical transmembrane segment spans residues 258 to 277; sequence VMIAQGLLLPAIVVLGLNIW. Over 278 to 300 the chain is Cytoplasmic; sequence TTNDNALYASGLGFANITGMSSK. The helical transmembrane segment at 301 to 320 threads the bilayer; it reads TLSVINGIIGTVCALWLYNN. Residue Phe321 is a topological domain, periplasmic. The helical transmembrane segment at 322-341 threads the bilayer; sequence VGWLTFLSAAIPPVGGVIIA. Topologically, residues 342–358 are cytoplasmic; that stretch reads DYLMNRRRYEHFATTRM. The helical transmembrane segment at 359-378 threads the bilayer; the sequence is MSVNWVAILAVALGIAAGHW. The Periplasmic portion of the chain corresponds to 379 to 380; that stretch reads LP. Residues 381–400 form a helical membrane-spanning segment; sequence GIVPVNAVLGGALSYLILNP. At 401-419 the chain is on the cytoplasmic side; sequence ILNRKTTAAMTHVEANSVE.

This sequence belongs to the purine-cytosine permease (2.A.39) family.

It localises to the cell inner membrane. Functionally, required for cytosine transport into the cell. The polypeptide is Cytosine permease (codB) (Escherichia coli O6:H1 (strain CFT073 / ATCC 700928 / UPEC)).